Consider the following 625-residue polypeptide: Dopamine beta-hydroxylase (625 aa).

Over 1 to 9 (MQVPSPSAR) the chain is Cytoplasmic. Residues 10 to 30 (EAASMYGTAVAVFLVLLVAVL) form a helical; Signal-anchor for type II membrane protein membrane-spanning segment. The Intragranular portion of the chain corresponds to 31-625 (QGLAPPESPL…TVVNIGGGKV (595 aa)). The region spanning 50–166 (GDLELSWDVS…GTVHLVYGVL (117 aa)) is the DOMON domain. 6 disulfides stabilise this stretch: Cys-147-Cys-604, Cys-224-Cys-275, Cys-261-Cys-287, Cys-382-Cys-495, Cys-386-Cys-573, and Cys-458-Cys-480. Asn-177 carries an N-linked (GlcNAc...) asparagine glycan. Tyr-222 is a catalytic residue. Positions 254 and 255 each coordinate Cu(2+). Asn-315 carries an N-linked (GlcNAc...) asparagine glycan. Cu(2+)-binding residues include His-325, His-404, His-406, and Met-479. The active site involves His-404. Asn-574 carries an N-linked (GlcNAc...) asparagine glycan.

Belongs to the copper type II ascorbate-dependent monooxygenase family. Homotetramer; composed of two disulfide-linked dimers. The cofactor is Cu(2+). In terms of processing, proteolytic cleavage after the membrane-anchor leads to the release of the soluble form. Post-translationally, N-glycosylated.

It is found in the cytoplasmic vesicle. Its subcellular location is the secretory vesicle lumen. The protein resides in the secretory vesicle. The protein localises to the chromaffin granule lumen. It localises to the secreted. It is found in the secretory vesicle membrane. Its subcellular location is the chromaffin granule membrane. It carries out the reaction dopamine + 2 L-ascorbate + O2 = (R)-noradrenaline + 2 monodehydro-L-ascorbate radical + H2O. Its pathway is catecholamine biosynthesis; (R)-noradrenaline biosynthesis; (R)-noradrenaline from dopamine: step 1/1. Functionally, catalyzes the hydroxylation of dopamine to noradrenaline (also known as norepinephrine), and is thus vital for regulation of these neurotransmitters. This Canis lupus familiaris (Dog) protein is Dopamine beta-hydroxylase (DBH).